Here is a 348-residue protein sequence, read N- to C-terminus: Eukaryotic translation initiation factor 3 subunit H (348 aa).

In terms of domain architecture, MPN spans 35–169 (VQIDGLVVLK…LKAYRLTPKL (135 aa)). Positions 267–285 (QQQKHQYQQRRQQENIQRQ) are enriched in low complexity. Positions 267–311 (QQQKHQYQQRRQQENIQRQSRGEPPLPEEDINKLFKPPQPPPRME) are disordered.

This sequence belongs to the eIF-3 subunit H family. In terms of assembly, component of the eukaryotic translation initiation factor 3 (eIF-3) complex, which is composed of 13 subunits: EIF3A, EIF3B, EIF3C, EIF3D, EIF3E, EIF3F, EIF3G, EIF3H, EIF3I, EIF3J, EIF3K, EIF3L and EIF3M.

Its subcellular location is the cytoplasm. Component of the eukaryotic translation initiation factor 3 (eIF-3) complex, which is involved in protein synthesis of a specialized repertoire of mRNAs and, together with other initiation factors, stimulates binding of mRNA and methionyl-tRNAi to the 40S ribosome. The eIF-3 complex specifically targets and initiates translation of a subset of mRNAs involved in cell proliferation. This is Eukaryotic translation initiation factor 3 subunit H from Taeniopygia guttata (Zebra finch).